The following is a 493-amino-acid chain: Aminotransferase swnA (493 aa).

Belongs to the class-I pyridoxal-phosphate-dependent aminotransferase family. It depends on pyridoxal 5'-phosphate as a cofactor.

It functions in the pathway mycotoxin biosynthesis. Aminotransferase; part of the gene cluster that mediates the biosynthesis of swainsonine (SW), a cytotoxic fungal alkaloid and a potential cancer therapy drug. Swainsonine production occurs via a multibranched pathway and is dispensable for fungal colonization of plants and infection of insect hosts. The first step of swainsonine biosynthesis is the production of the precursor pipecolic acid (PA) via conversion of L-lysine (Lys) to 1-piperideine-6-carboxylate (P6C) by the aminotransferase swnA, the latter being further reduced to PA by the reductase swnR. The PKS-NRPS hybrid synthetase swnK uptakes and condensates PA and malonyl-CoA with and without skipping of the ketoreductase (KR) domain in order to produce 3 intermediates, 1-oxoindolizidine, (1S)-1-hydroxyindolizin, and (1R)-1-hydroxyindolizine; with the transisomer (1S)-1-hydroxyindolizin being predominant. The terminal thioester reductase (TE) domain of swnK is involved in reduction of the thioester bond to release the intermediate aldehydes. The oxidoreductase swnN could contribute to the reduction of 1-oxoindolizidine to (1S)-1-hydroxyindolizin and (1R)-1-hydroxyindolizine, contributing to the major route of SW production. The dioxygenase swnH2 would be responsible for the oxidization of (1R)-1-hydroxyindolizine into (1R,2S)-1,2-dihydroxyindolizine and of (1S)-1-hydroxyindolizin to yield both (1R,2S)-1,2-dihydroxyindolizine and (1S,2S)-1,2-dihydroxyindolizine. The dioxygenase swnH1 then performs the conversion of the 1,2-dihydroxyindolizine epimers to SW. This chain is Aminotransferase swnA, found in Arthroderma benhamiae (strain ATCC MYA-4681 / CBS 112371) (Trichophyton mentagrophytes).